The chain runs to 508 residues: NADH-quinone oxidoreductase subunit N 2 (508 aa).

Transmembrane regions (helical) follow at residues 14–34 (SYVA…VIVL), 43–63 (SLVW…WYTA), 90–110 (FTFF…LLSA), 119–139 (GAHM…MFMV), 144–164 (LLTI…LAGI), 179–199 (FLTG…IYGV), 223–243 (GPAL…GFGF), 275–295 (GAAM…APFT), 298–318 (WALI…LVAL), 327–347 (MAYS…ASGL), 353–373 (ISSV…IFAV), 400–420 (AWAL…VGFL), 433–455 (GYLW…YYRV), and 473–493 (TGIS…TIFA).

This sequence belongs to the complex I subunit 2 family. In terms of assembly, NDH-1 is composed of 14 different subunits. Subunits NuoA, H, J, K, L, M, N constitute the membrane sector of the complex.

The protein localises to the cell membrane. It catalyses the reaction a quinone + NADH + 5 H(+)(in) = a quinol + NAD(+) + 4 H(+)(out). Functionally, NDH-1 shuttles electrons from NADH, via FMN and iron-sulfur (Fe-S) centers, to quinones in the respiratory chain. The immediate electron acceptor for the enzyme in this species is believed to be a menaquinone. Couples the redox reaction to proton translocation (for every two electrons transferred, four hydrogen ions are translocated across the cytoplasmic membrane), and thus conserves the redox energy in a proton gradient. In Symbiobacterium thermophilum (strain DSM 24528 / JCM 14929 / IAM 14863 / T), this protein is NADH-quinone oxidoreductase subunit N 2.